A 529-amino-acid chain; its full sequence is Bifunctional purine biosynthesis protein PurH (529 aa).

The MGS-like domain maps to 3 to 149 (DRIPLKRALI…KNHAFVTVVV (147 aa)).

This sequence belongs to the PurH family.

It carries out the reaction (6R)-10-formyltetrahydrofolate + 5-amino-1-(5-phospho-beta-D-ribosyl)imidazole-4-carboxamide = 5-formamido-1-(5-phospho-D-ribosyl)imidazole-4-carboxamide + (6S)-5,6,7,8-tetrahydrofolate. The catalysed reaction is IMP + H2O = 5-formamido-1-(5-phospho-D-ribosyl)imidazole-4-carboxamide. It participates in purine metabolism; IMP biosynthesis via de novo pathway; 5-formamido-1-(5-phospho-D-ribosyl)imidazole-4-carboxamide from 5-amino-1-(5-phospho-D-ribosyl)imidazole-4-carboxamide (10-formyl THF route): step 1/1. The protein operates within purine metabolism; IMP biosynthesis via de novo pathway; IMP from 5-formamido-1-(5-phospho-D-ribosyl)imidazole-4-carboxamide: step 1/1. The polypeptide is Bifunctional purine biosynthesis protein PurH (Paracoccus denitrificans (strain Pd 1222)).